A 511-amino-acid chain; its full sequence is Glucans biosynthesis protein G (511 aa).

A signal peptide spans 1-22 (MMKMRWLGAAIMLTLYASSSWA).

The protein belongs to the OpgD/OpgG family.

The protein resides in the periplasm. It functions in the pathway glycan metabolism; osmoregulated periplasmic glucan (OPG) biosynthesis. Its function is as follows. Involved in the biosynthesis of osmoregulated periplasmic glucans (OPGs). This Salmonella paratyphi A (strain ATCC 9150 / SARB42) protein is Glucans biosynthesis protein G.